A 95-amino-acid polypeptide reads, in one-letter code: Co-chaperonin GroES (95 aa).

It belongs to the GroES chaperonin family. Heptamer of 7 subunits arranged in a ring. Interacts with the chaperonin GroEL.

It localises to the cytoplasm. Together with the chaperonin GroEL, plays an essential role in assisting protein folding. The GroEL-GroES system forms a nano-cage that allows encapsulation of the non-native substrate proteins and provides a physical environment optimized to promote and accelerate protein folding. GroES binds to the apical surface of the GroEL ring, thereby capping the opening of the GroEL channel. This Jannaschia sp. (strain CCS1) protein is Co-chaperonin GroES.